The primary structure comprises 226 residues: MSFVESWRFAGARRRRQVTPGPATRPGYSDYTQGDSWGEGEGDEDEGCDQVARDLRAEFSARASSETKRAPLLPRVGDGSPVLPDKRNGIFPATAAKRTQARRWPIQALSILCSLLFAVLLAFLLAIAYMIVKELHAENLKNEDDIHTGLLGFWSLLIISLTAGLSCCSFSWTVTYFDSFEPGMFPPTPLSPARFKKLTGHSFHMGYSMAILNGIVAALTVAWCLM.

A disordered region spans residues 1-49 (MSFVESWRFAGARRRRQVTPGPATRPGYSDYTQGDSWGEGEGDEDEGCD). 2 positions are modified to phosphoserine: S2 and S36. The segment covering 38 to 48 (GEGEGDEDEGC) has biased composition (acidic residues). S60, S65, and S80 each carry phosphoserine. The next 3 membrane-spanning stretches (helical) occupy residues 111–131 (ILCS…AYMI), 150–170 (LLGF…CCSF), and 205–225 (MGYS…AWCL).

This sequence belongs to the ARL6IP6 family.

It is found in the nucleus inner membrane. The polypeptide is ADP-ribosylation factor-like protein 6-interacting protein 6 (Arl6ip6) (Mus musculus (Mouse)).